The primary structure comprises 246 residues: MKKILAEIAYDGSIYHGFQIQPTKPTVQGEIEKALMKINKKKVKIHSSGRTDKGVHAKRQIITFDIKINIQLNNLKKALNAILLKNSIKILKLRYVKNSFHPRFSAQKRKYSYCILNSDNYYPWEGYQAHYVNKKLSISNLNQMAKTLIGKHDFTTFSCIKDKSKSKFRHIYFAKFKKRGKYIIFEIIGSSFLWKMVRSIMGTMLDIEIKNESISTFETILKSKNRNLARTTAPANALFLERVYYE.

The Nucleophile role is filled by Asp52. Tyr111 contacts substrate.

It belongs to the tRNA pseudouridine synthase TruA family. Homodimer.

The catalysed reaction is uridine(38/39/40) in tRNA = pseudouridine(38/39/40) in tRNA. Functionally, formation of pseudouridine at positions 38, 39 and 40 in the anticodon stem and loop of transfer RNAs. The sequence is that of tRNA pseudouridine synthase A from Borreliella burgdorferi (strain ZS7) (Borrelia burgdorferi).